Here is a 159-residue protein sequence, read N- to C-terminus: Phosphopantetheine adenylyltransferase (159 aa).

Thr-10 is a binding site for substrate. ATP contacts are provided by residues 10–11 (TF) and His-18. 3 residues coordinate substrate: Lys-42, Met-74, and Arg-88. Residues 89–91 (GLR), Glu-99, and 124–130 (WSFISSS) contribute to the ATP site.

The protein belongs to the bacterial CoaD family. As to quaternary structure, homohexamer. Requires Mg(2+) as cofactor.

It localises to the cytoplasm. It carries out the reaction (R)-4'-phosphopantetheine + ATP + H(+) = 3'-dephospho-CoA + diphosphate. It participates in cofactor biosynthesis; coenzyme A biosynthesis; CoA from (R)-pantothenate: step 4/5. Reversibly transfers an adenylyl group from ATP to 4'-phosphopantetheine, yielding dephospho-CoA (dPCoA) and pyrophosphate. The protein is Phosphopantetheine adenylyltransferase of Salmonella paratyphi A (strain ATCC 9150 / SARB42).